Consider the following 1018-residue polypeptide: Probable inorganic carbon transporter subunit DabA 2 (1018 aa).

The Zn(2+) site is built by Cys-489, Asp-491, His-674, and Cys-689.

It belongs to the inorganic carbon transporter (TC 9.A.2) DabA family. In terms of assembly, forms a complex with DabB. Zn(2+) serves as cofactor.

It localises to the cell inner membrane. In terms of biological role, part of an energy-coupled inorganic carbon pump. This is Probable inorganic carbon transporter subunit DabA 2 from Sorangium cellulosum (strain So ce56) (Polyangium cellulosum (strain So ce56)).